We begin with the raw amino-acid sequence, 593 residues long: Probable tripeptidyl-peptidase SED3 (593 aa).

The signal sequence occupies residues 1-18 (MLLRWHSVIPLFLAMTVA). A propeptide spans 19–198 (FPNTYRTVVE…NLQAIYLSTN (180 aa)) (removed in mature form). N-linked (GlcNAc...) asparagine glycans are attached at residues asparagine 204, asparagine 261, and asparagine 275. Residues 206-592 (TITPRCLREL…RILAKIVQHM (387 aa)) enclose the Peptidase S53 domain. Active-site charge relay system residues include glutamate 282 and aspartate 286. Asparagine 295 carries N-linked (GlcNAc...) asparagine glycosylation. The Charge relay system role is filled by serine 496. Positions 538 and 539 each coordinate Ca(2+). Asparagine 554 and asparagine 566 each carry an N-linked (GlcNAc...) asparagine glycan. Ca(2+) contacts are provided by glycine 570 and aspartate 572.

Requires Ca(2+) as cofactor.

The protein localises to the secreted. It is found in the extracellular space. It carries out the reaction Release of an N-terminal tripeptide from a polypeptide.. Functionally, secreted tripeptidyl-peptidase which degrades proteins at acidic pHs and is involved in virulence. The sequence is that of Probable tripeptidyl-peptidase SED3 (SED3) from Arthroderma benhamiae (strain ATCC MYA-4681 / CBS 112371) (Trichophyton mentagrophytes).